We begin with the raw amino-acid sequence, 346 residues long: uncharacterized protein (346 aa).

An N-terminal signal peptide occupies residues 1–28 (MFEWMKNKKAISPILALLIVLGVTIVVG).

This is an uncharacterized protein from Methanocaldococcus jannaschii (strain ATCC 43067 / DSM 2661 / JAL-1 / JCM 10045 / NBRC 100440) (Methanococcus jannaschii).